The primary structure comprises 425 residues: [Pyruvate dehydrogenase (acetyl-transferring)] kinase, mitochondrial (425 aa).

His178 bears the Phosphohistidine; by autocatalysis mark. The Histidine kinase domain maps to 180–418 (NVAVEIALDI…DVYIHLNRLC (239 aa)). ATP is bound by residues 296-303 (EILKNSLR), Asp336, 355-356 (TT), and 379-384 (GFGFGL).

This sequence belongs to the PDK/BCKDK protein kinase family.

The protein resides in the mitochondrion matrix. The enzyme catalyses L-seryl-[pyruvate dehydrogenase E1 alpha subunit] + ATP = O-phospho-L-seryl-[pyruvate dehydrogenase E1 alpha subunit] + ADP + H(+). Functionally, inhibits the mitochondrial pyruvate dehydrogenase complex by phosphorylation of the E1 alpha subunit, thus contributing to the regulation of glucose metabolism. This is [Pyruvate dehydrogenase (acetyl-transferring)] kinase, mitochondrial (pkp1) from Schizosaccharomyces pombe (strain 972 / ATCC 24843) (Fission yeast).